The following is a 233-amino-acid chain: MAKLSKRMRVIREKVDGTKEYSINEAIALLKELATAKFVESVDVAVNLGIDARKSDQNVRGATVLPHGTGREVRVAVFTQGANAEAAKAAGAELVGMDDLADLVKKGEMNFDVVIASPDAMRVVGQLGQILGPRGLMPNPKVGTVTPNVAEAVKNAKAGQVRYRNDKNGIIHTTLGKVSFNEVQLKENLEALLVALKKAKPSSAKGVFIKKVSISTTMGAGVAVDQASLEAQA.

Belongs to the universal ribosomal protein uL1 family. In terms of assembly, part of the 50S ribosomal subunit.

In terms of biological role, binds directly to 23S rRNA. The L1 stalk is quite mobile in the ribosome, and is involved in E site tRNA release. Its function is as follows. Protein L1 is also a translational repressor protein, it controls the translation of the L11 operon by binding to its mRNA. This Aeromonas hydrophila subsp. hydrophila (strain ATCC 7966 / DSM 30187 / BCRC 13018 / CCUG 14551 / JCM 1027 / KCTC 2358 / NCIMB 9240 / NCTC 8049) protein is Large ribosomal subunit protein uL1.